A 335-amino-acid polypeptide reads, in one-letter code: Dihydroorotate dehydrogenase (quinone) (335 aa).

Residues 58 to 62 (AGADK) and Thr-82 contribute to the FMN site. A substrate-binding site is contributed by Lys-62. 107–111 (NRNGF) is a substrate binding site. Positions 135 and 168 each coordinate FMN. Asn-168 provides a ligand contact to substrate. Ser-171 (nucleophile) is an active-site residue. Substrate is bound at residue Asn-173. FMN contacts are provided by Lys-213 and Gly-241. 242 to 243 (NT) is a binding site for substrate. FMN-binding positions include Gly-264, Gly-293, and 314–315 (YS).

Belongs to the dihydroorotate dehydrogenase family. Type 2 subfamily. Monomer. It depends on FMN as a cofactor.

The protein localises to the cell membrane. It carries out the reaction (S)-dihydroorotate + a quinone = orotate + a quinol. Its pathway is pyrimidine metabolism; UMP biosynthesis via de novo pathway; orotate from (S)-dihydroorotate (quinone route): step 1/1. In terms of biological role, catalyzes the conversion of dihydroorotate to orotate with quinone as electron acceptor. The protein is Dihydroorotate dehydrogenase (quinone) of Actinobacillus pleuropneumoniae serotype 7 (strain AP76).